Reading from the N-terminus, the 227-residue chain is ATP synthase subunit delta (227 aa).

Belongs to the ATPase delta chain family. F-type ATPases have 2 components, F(1) - the catalytic core - and F(0) - the membrane proton channel. F(1) has five subunits: alpha(3), beta(3), gamma(1), delta(1), epsilon(1). F(0) has three main subunits: a(1), b(2) and c(10-14). The alpha and beta chains form an alternating ring which encloses part of the gamma chain. F(1) is attached to F(0) by a central stalk formed by the gamma and epsilon chains, while a peripheral stalk is formed by the delta and b chains.

Its subcellular location is the cell inner membrane. Its function is as follows. F(1)F(0) ATP synthase produces ATP from ADP in the presence of a proton or sodium gradient. F-type ATPases consist of two structural domains, F(1) containing the extramembraneous catalytic core and F(0) containing the membrane proton channel, linked together by a central stalk and a peripheral stalk. During catalysis, ATP synthesis in the catalytic domain of F(1) is coupled via a rotary mechanism of the central stalk subunits to proton translocation. Functionally, this protein is part of the stalk that links CF(0) to CF(1). It either transmits conformational changes from CF(0) to CF(1) or is implicated in proton conduction. The chain is ATP synthase subunit delta from Rhodopirellula baltica (strain DSM 10527 / NCIMB 13988 / SH1).